The primary structure comprises 194 residues: 22 kDa relaxation protein (194 aa).

Its function is as follows. This protein is probably required for relaxation complex formation. This is 22 kDa relaxation protein from Salmonella typhimurium.